Here is a 103-residue protein sequence, read N- to C-terminus: Small ribosomal subunit protein uS10 (103 aa).

The protein belongs to the universal ribosomal protein uS10 family. In terms of assembly, part of the 30S ribosomal subunit.

Functionally, involved in the binding of tRNA to the ribosomes. The protein is Small ribosomal subunit protein uS10 of Korarchaeum cryptofilum (strain OPF8).